The chain runs to 297 residues: Lipoyl synthase (297 aa).

Positions 37, 42, 48, 63, 67, 70, and 276 each coordinate [4Fe-4S] cluster. Residues 49–265 form the Radical SAM core domain; it reads WSRKHATVMI…ERIAKTKGFL (217 aa).

It belongs to the radical SAM superfamily. Lipoyl synthase family. [4Fe-4S] cluster is required as a cofactor.

It is found in the cytoplasm. It catalyses the reaction [[Fe-S] cluster scaffold protein carrying a second [4Fe-4S](2+) cluster] + N(6)-octanoyl-L-lysyl-[protein] + 2 oxidized [2Fe-2S]-[ferredoxin] + 2 S-adenosyl-L-methionine + 4 H(+) = [[Fe-S] cluster scaffold protein] + N(6)-[(R)-dihydrolipoyl]-L-lysyl-[protein] + 4 Fe(3+) + 2 hydrogen sulfide + 2 5'-deoxyadenosine + 2 L-methionine + 2 reduced [2Fe-2S]-[ferredoxin]. It participates in protein modification; protein lipoylation via endogenous pathway; protein N(6)-(lipoyl)lysine from octanoyl-[acyl-carrier-protein]: step 2/2. In terms of biological role, catalyzes the radical-mediated insertion of two sulfur atoms into the C-6 and C-8 positions of the octanoyl moiety bound to the lipoyl domains of lipoate-dependent enzymes, thereby converting the octanoylated domains into lipoylated derivatives. This is Lipoyl synthase from Rickettsia typhi (strain ATCC VR-144 / Wilmington).